A 503-amino-acid polypeptide reads, in one-letter code: Transcriptional regulator LovE (503 aa).

The segment covering 1–14 has biased composition (polar residues); it reads MAADQGTFTTSVTL. The tract at residues 1 to 21 is disordered; the sequence is MAADQGTFTTSVTLSPVEGSR. The segment at residues 35–67 is a DNA-binding region (zn(2)-C6 fungal-type); it reads CDRCHAQKIKCTGNKEVTARAPCQRCQQAGLRC. Disordered regions lie at residues 89–124 and 331–362; these read ADPDPCLHMSSPPVPSQSLPLDVSESHSSNTSRQFL and SHMNPWEGSRSESPSRDDTSSTSGHSSVDTIP. A compositionally biased stretch (basic and acidic residues) spans 339-349; that stretch reads SRSESPSRDDT. Polar residues predominate over residues 350-359; sequence SSTSGHSSVD.

The protein resides in the nucleus. Functionally, transcription factor that regulates the expression of the he gene cluster that mediates the biosynthesis of lovastatin (also known as mevinolin, mevacor or monacolin K), a hypolipidemic inhibitor of (3S)-hydroxymethylglutaryl-coenzyme A (HMG-CoA) reductase (HMGR). The polypeptide is Transcriptional regulator LovE (Aspergillus terreus (strain NIH 2624 / FGSC A1156)).